The primary structure comprises 274 residues: Nitrogenase iron protein (274 aa).

Position 8 to 15 (8 to 15 (GKGGIGKS)) interacts with ATP. C94 contributes to the [4Fe-4S] cluster binding site. R97 is subject to ADP-ribosylarginine; by dinitrogenase reductase ADP-ribosyltransferase. Position 131 (C131) interacts with [4Fe-4S] cluster.

This sequence belongs to the NifH/BchL/ChlL family. As to quaternary structure, homodimer. [4Fe-4S] cluster is required as a cofactor. The reversible ADP-ribosylation of Arg-97 inactivates the nitrogenase reductase and regulates nitrogenase activity.

It carries out the reaction N2 + 8 reduced [2Fe-2S]-[ferredoxin] + 16 ATP + 16 H2O = H2 + 8 oxidized [2Fe-2S]-[ferredoxin] + 2 NH4(+) + 16 ADP + 16 phosphate + 6 H(+). The key enzymatic reactions in nitrogen fixation are catalyzed by the nitrogenase complex, which has 2 components: the iron protein and the molybdenum-iron protein. This is Nitrogenase iron protein from Pelodictyon phaeoclathratiforme (strain DSM 5477 / BU-1).